The following is a 518-amino-acid chain: Cyclin-L2 (518 aa).

Cyclin-like stretches follow at residues 81-183 and 196-280; these read ELIQ…RVLK and KIIV…KILQ. The tract at residues 310-518 is disordered; sequence AKGLLPGTAP…DHPGHSRHRR (209 aa). Ser-328, Ser-335, Ser-345, Ser-348, and Ser-366 each carry phosphoserine. The interval 382–420 is RS; that stretch reads RSREQSYSRSPSRSASPKRRKSDSGSTSGGSKSQSRSRS. The segment covering 405-427 has biased composition (low complexity); the sequence is SGSTSGGSKSQSRSRSRSDSPPR. The span at 438–450 shows a compositional bias: basic and acidic residues; the sequence is SEVRGSRKSKDCK. Over residues 455-469 the composition is skewed to basic residues; it reads KPHKSRSRSSSRSRS. Composition is skewed to basic and acidic residues over residues 470–479 and 487–512; these read RSRERTDNSG and YYRD…DHPG.

Belongs to the cyclin family. Cyclin L subfamily. Interacts with CDK11A, CDK11B, CDK12, CDK13 and POLR2A, the hyperphosphorylated C-terminal domain (CTD) of RNA polymerase II. May form a ternary complex with CDK11B and casein kinase II (CKII). Interacts with pre-mRNA-splicing factors, including at least SRSF1, SRSF2 and SRSF7/SLU7. In terms of tissue distribution, widely expressed (at protein level).

The protein resides in the nucleus speckle. It is found in the nucleus. Its subcellular location is the nucleoplasm. Functionally, involved in pre-mRNA splicing. May induce cell death, possibly by acting on the transcription and RNA processing of apoptosis-related factors. The polypeptide is Cyclin-L2 (Ccnl2) (Mus musculus (Mouse)).